We begin with the raw amino-acid sequence, 249 residues long: Probable transcriptional regulatory protein ZMO0153 (249 aa).

It belongs to the TACO1 family.

The protein resides in the cytoplasm. This chain is Probable transcriptional regulatory protein ZMO0153, found in Zymomonas mobilis subsp. mobilis (strain ATCC 31821 / ZM4 / CP4).